The primary structure comprises 490 residues: Argininosuccinate lyase (490 aa).

Disordered stretches follow at residues 426-452 and 469-490; these read DPESSVASRDSLGGPAPESMAAALSAA and ALATAADERERVVSSYDSTAPE. Positions 440 to 452 are enriched in low complexity; sequence PAPESMAAALSAA. Positions 469–480 are enriched in basic and acidic residues; the sequence is ALATAADERERV.

This sequence belongs to the lyase 1 family. Argininosuccinate lyase subfamily.

Its subcellular location is the cytoplasm. It catalyses the reaction 2-(N(omega)-L-arginino)succinate = fumarate + L-arginine. It functions in the pathway amino-acid biosynthesis; L-arginine biosynthesis; L-arginine from L-ornithine and carbamoyl phosphate: step 3/3. This Natronomonas pharaonis (strain ATCC 35678 / DSM 2160 / CIP 103997 / JCM 8858 / NBRC 14720 / NCIMB 2260 / Gabara) (Halobacterium pharaonis) protein is Argininosuccinate lyase.